Here is a 237-residue protein sequence, read N- to C-terminus: Probable transcriptional regulatory protein NIS_0560 (237 aa).

The protein belongs to the TACO1 family.

It is found in the cytoplasm. In Nitratiruptor sp. (strain SB155-2), this protein is Probable transcriptional regulatory protein NIS_0560.